We begin with the raw amino-acid sequence, 512 residues long: Glycerol kinase, glycosomal (512 aa).

Threonine 11 contacts substrate. Arginine 15 serves as a coordination point for ATP. Positions 84, 139, and 254 each coordinate substrate. ATP contacts are provided by residues threonine 276, glycine 321, and 422 to 426; that span reads GLSKN. The Microbody targeting signal signature appears at 510 to 512; it reads AKL.

This sequence belongs to the FGGY kinase family.

The protein localises to the glycosome. The enzyme catalyses glycerol + ATP = sn-glycerol 3-phosphate + ADP + H(+). The protein operates within polyol metabolism; glycerol degradation via glycerol kinase pathway; sn-glycerol 3-phosphate from glycerol: step 1/1. Catalyzes the phosphorylation of glycerol using ATP. Under anoxic conditions, when glycerol 3-phosphate accumulates in the glycosome, it catalyzes the reverse reaction, maintaining the ATP balance. Key enzyme for the survival of bloodstream forms under anoxic conditions. In Trypanosoma brucei brucei, this protein is Glycerol kinase, glycosomal (GK).